The following is a 162-amino-acid chain: uncharacterized protein (162 aa).

This is an uncharacterized protein from Methanocaldococcus jannaschii (strain ATCC 43067 / DSM 2661 / JAL-1 / JCM 10045 / NBRC 100440) (Methanococcus jannaschii).